Consider the following 372-residue polypeptide: Putative neuropeptide precursor protein (372 aa).

Residues 1 to 17 (MLLFSLTAITAVLAVSA) form the signal peptide. Disordered stretches follow at residues 18–89 (VPTP…SNGE) and 136–208 (VTKS…KRDS). The span at 19–31 (PTPSNNKDGSTIS) shows a compositional bias: polar residues. Over residues 38–57 (DQTKDDNRSLFLNKSDKNDL) the composition is skewed to basic and acidic residues. The segment covering 72-89 (GYDQTVDQRFDSPQSNGE) has biased composition (polar residues). Low complexity predominate over residues 177 to 191 (GGAAASAKTATKNSG).

In terms of processing, may be proteolytically processed to give rise to a number of active peptides. In terms of tissue distribution, detected in the brain and frontal ganglion and in the axons connecting to the corpus cardiacum and corpus allatum (at protein level). Detected in the brain-subesophageal ganglion (brain-SG) complex, fat body, midgut and ovary. Expression in the brain-SG complex is 2-3 times higher than in the other tissues.

The protein resides in the cytoplasm. It is found in the secreted. In Bombyx mori (Silk moth), this protein is Putative neuropeptide precursor protein.